The sequence spans 247 residues: ATP synthase subunit a, chloroplastic (247 aa).

5 helical membrane-spanning segments follow: residues 38–58, 95–115, 134–154, 199–219, and 220–240; these read QVLITSWVVIAILLGSAFIAV, VPFIGTLFLFIFVSNWSGALL, INTTVALALLTSIAYFYAGLS, LVVVVLVSLVPLVVPIPVMFL, and GLFTSGIQALIFATLAAAYIG.

It belongs to the ATPase A chain family. F-type ATPases have 2 components, CF(1) - the catalytic core - and CF(0) - the membrane proton channel. CF(1) has five subunits: alpha(3), beta(3), gamma(1), delta(1), epsilon(1). CF(0) has four main subunits: a, b, b' and c.

The protein resides in the plastid. The protein localises to the chloroplast thylakoid membrane. In terms of biological role, key component of the proton channel; it plays a direct role in the translocation of protons across the membrane. This is ATP synthase subunit a, chloroplastic from Citrus sinensis (Sweet orange).